A 452-amino-acid polypeptide reads, in one-letter code: Tol-Pal system protein TolB (452 aa).

Residues 1-31 (MCGVRRGMGVLLLFCAVALCAMPFVVRSVWG) form the signal peptide.

It belongs to the TolB family. As to quaternary structure, the Tol-Pal system is composed of five core proteins: the inner membrane proteins TolA, TolQ and TolR, the periplasmic protein TolB and the outer membrane protein Pal. They form a network linking the inner and outer membranes and the peptidoglycan layer.

Its subcellular location is the periplasm. Part of the Tol-Pal system, which plays a role in outer membrane invagination during cell division and is important for maintaining outer membrane integrity. This Syntrophus aciditrophicus (strain SB) protein is Tol-Pal system protein TolB.